Consider the following 183-residue polypeptide: Capsid protein (183 aa).

Residues 136–183 (NAPILSTLPETTVVRQRGRAPRRRTPSPRRRRSQSPRRRRSQSPASQC) are disordered. Residues 151–176 (QRGRAPRRRTPSPRRRRSQSPRRRRS) show a composition bias toward basic residues. The 1; half-length repeat unit spans residues 155-161 (APRRRTP). Positions 155–177 (APRRRTPSPRRRRSQSPRRRRSQ) are 3 X 8 AA repeats of S-P-R-R-R-[PR]-S-Q. A Bipartite nuclear localization signal motif is present at residues 158-175 (RRTPSPRRRRSQSPRRRR). Ser162 and Ser170 each carry phosphoserine; by host. 2 repeat units span residues 162 to 169 (SPRRRRSQ) and 170 to 177 (SPRRRRSQ). The tract at residues 177-183 (QSPASQC) is RNA binding.

This sequence belongs to the orthohepadnavirus core antigen family. In terms of assembly, homodimerizes, then multimerizes. Interacts with cytosol exposed regions of viral L glycoprotein present in the reticulum-to-Golgi compartment. Interacts with human FLNB. Phosphorylated form interacts with host importin alpha; this interaction depends on the exposure of the NLS, which itself depends upon genome maturation and/or phosphorylation of the capsid protein. Interacts with host NUP153. Post-translationally, phosphorylated by host SRPK1, SRPK2, and maybe protein kinase C or GAPDH. Phosphorylation is critical for pregenomic RNA packaging. Protein kinase C phosphorylation is stimulated by HBx protein and may play a role in transport of the viral genome to the nucleus at the late step during the viral replication cycle.

It is found in the virion. It localises to the host cytoplasm. Self assembles to form an icosahedral capsid. Most capsids appear to be large particles with an icosahedral symmetry of T=4 and consist of 240 copies of capsid protein, though a fraction forms smaller T=3 particles consisting of 180 capsid proteins. Entering capsids are transported along microtubules to the nucleus. Phosphorylation of the capsid is thought to induce exposure of nuclear localization signal in the C-terminal portion of the capsid protein that allows binding to the nuclear pore complex via the importin (karyopherin-) alpha and beta. Capsids are imported in intact form through the nuclear pore into the nuclear basket, where it probably binds NUP153. Only capsids that contain the mature viral genome can release the viral DNA and capsid protein into the nucleoplasm. Immature capsids get stuck in the basket. Capsids encapsulate the pre-genomic RNA and the P protein. Pre-genomic RNA is reverse-transcribed into DNA while the capsid is still in the cytoplasm. The capsid can then either be directed to the nucleus, providing more genomes for transcription, or bud through the endoplasmic reticulum to provide new virions. The chain is Capsid protein from Homo sapiens (Human).